Here is a 361-residue protein sequence, read N- to C-terminus: Septin-1 (361 aa).

In terms of domain architecture, Septin-type G spans 32-304; that stretch reads KGFEFTLMVV…ENYRSDRLAK (273 aa). A G1 motif region spans residues 42 to 49; it reads GESGLGKS. GTP contacts are provided by residues 42–49, Thr76, Gly102, 181–189, Gly239, and Arg254; these read GESGLGKS and KADCLTKKE. Residues 99-102 are G3 motif; sequence DTPG. The G4 motif stretch occupies residues 180 to 183; the sequence is AKAD. Ser319 is modified (phosphoserine).

Belongs to the TRAFAC class TrmE-Era-EngA-EngB-Septin-like GTPase superfamily. Septin GTPase family. As to quaternary structure, likely part of a multicomponent septin complex that includes pnut. Interacts with pnut. Interacts with park. Post-translationally, ubiquitinated by park, leading to its degradation by the proteasome. In terms of tissue distribution, accumulates at the leading edge of the cleavage furrow in dividing cells and cellularizing embryos (at protein level). Also accumulates at the leading edge of the embryo epithelium during dorsal closure, in the embryonic neurons, and at the baso-lateral surfaces of ovarian follicle cells (at protein level).

Its subcellular location is the cytoplasm. Its function is as follows. Involved in cytokinesis. May be involved in p53-dependent apoptosis. The protein is Septin-1 of Drosophila melanogaster (Fruit fly).